Consider the following 976-residue polypeptide: Leucine--tRNA ligase (976 aa).

Residues 1-23 are compositionally biased toward low complexity; sequence MTESPTTTPGSTSGAPSGVPSGV. The segment at 1–34 is disordered; sequence MTESPTTTPGSTSGAPSGVPSGVNDAESDAPRHR. The 'HIGH' region signature appears at 86-97; the sequence is PYPSGEGLHVGH. Positions 745-749 match the 'KMSKS' region motif; the sequence is KIGKS. ATP is bound at residue Lys-748.

Belongs to the class-I aminoacyl-tRNA synthetase family.

The protein localises to the cytoplasm. It carries out the reaction tRNA(Leu) + L-leucine + ATP = L-leucyl-tRNA(Leu) + AMP + diphosphate. The sequence is that of Leucine--tRNA ligase from Mycobacterium ulcerans (strain Agy99).